A 75-amino-acid polypeptide reads, in one-letter code: CDC42 small effector protein 1 (75 aa).

S-palmitoyl cysteine attachment occurs at residues C10 and C11. The CRIB domain occupies 30 to 43; the sequence is IGEPTNFVHLTHIG. A disordered region spans residues 45 to 75; it reads GEMADGMQPSGPIKEQMRSKVPHANGRNSLL.

This sequence belongs to the CDC42SE/SPEC family.

It is found in the cytoplasm. The protein resides in the cytoskeleton. The protein localises to the cell membrane. Its function is as follows. Probably involved in the organization of the actin cytoskeleton by acting downstream of CDC42, inducing actin filament assembly. This chain is CDC42 small effector protein 1 (cdc42se1), found in Danio rerio (Zebrafish).